Consider the following 260-residue polypeptide: Thiazole synthase (260 aa).

The Schiff-base intermediate with DXP role is filled by lysine 102. Residues glycine 163, 189 to 190, and 211 to 212 each bind 1-deoxy-D-xylulose 5-phosphate; these read AG and NT.

The protein belongs to the ThiG family. As to quaternary structure, homotetramer. Forms heterodimers with either ThiH or ThiS.

It localises to the cytoplasm. The catalysed reaction is [ThiS sulfur-carrier protein]-C-terminal-Gly-aminoethanethioate + 2-iminoacetate + 1-deoxy-D-xylulose 5-phosphate = [ThiS sulfur-carrier protein]-C-terminal Gly-Gly + 2-[(2R,5Z)-2-carboxy-4-methylthiazol-5(2H)-ylidene]ethyl phosphate + 2 H2O + H(+). It functions in the pathway cofactor biosynthesis; thiamine diphosphate biosynthesis. In terms of biological role, catalyzes the rearrangement of 1-deoxy-D-xylulose 5-phosphate (DXP) to produce the thiazole phosphate moiety of thiamine. Sulfur is provided by the thiocarboxylate moiety of the carrier protein ThiS. In vitro, sulfur can be provided by H(2)S. The polypeptide is Thiazole synthase (Geobacter sp. (strain M21)).